Reading from the N-terminus, the 61-residue chain is Small ribosomal subunit protein uS14 (61 aa).

4 residues coordinate Zn(2+): C24, C27, C40, and C43.

It belongs to the universal ribosomal protein uS14 family. Zinc-binding uS14 subfamily. In terms of assembly, part of the 30S ribosomal subunit. Contacts proteins S3 and S10. Zn(2+) serves as cofactor.

Its function is as follows. Binds 16S rRNA, required for the assembly of 30S particles and may also be responsible for determining the conformation of the 16S rRNA at the A site. This is Small ribosomal subunit protein uS14 from Sulfurovum sp. (strain NBC37-1).